Here is a 122-residue protein sequence, read N- to C-terminus: Biogenesis of lysosome-related organelles complex 1 subunit CNL1 (122 aa).

A compositionally biased stretch (basic and acidic residues) spans methionine 1–glutamate 10. Positions methionine 1–isoleucine 21 are disordered. The stretch at glutamate 63 to isoleucine 95 forms a coiled coil.

The protein belongs to the BLOC1S4 family. As to quaternary structure, component of the biogenesis of lysosome-related organelles complex-1 (BLOC-1) composed of at least BLI1, BLS1, CNL1, KXD1, SNN1 and VAB2.

It localises to the cytoplasm. Its function is as follows. Component of the biogenesis of lysosome-related organelles complex-1 (BLOC-1), a complex that is involved in endosomal cargo sorting. This chain is Biogenesis of lysosome-related organelles complex 1 subunit CNL1 (CNL1), found in Saccharomyces cerevisiae (strain ATCC 204508 / S288c) (Baker's yeast).